The primary structure comprises 308 residues: MARDKDLSPYLDFDRETWRHLRMSMPQVLTEQEVVELRGIGENIDLDEVAEVYLPLSRLIHLQVHARQELTQATETFLGEKAPHIPFVIGVAGSVAVGKSTTARLLQVLLQRWDEHPRVDLVTTDGFLHPTEILKKRGILDRKGFPESYDQRALLRFVTDVKAGKAHVKAPVYSHTLYDRVENECVTVSRPDILIVEGLNVLQTGPTLSVSDLFDFSVYVDAALEDIERWYIDRFLKLRQLAFRAPNAHFSHYADMGDRAATDEARRIWQTINLPNLVEHILPTRVRASLVLCKGADHKVARVRMRKI.

Glycine 93 to serine 100 lines the ATP pocket.

Belongs to the prokaryotic pantothenate kinase family.

Its subcellular location is the cytoplasm. The catalysed reaction is (R)-pantothenate + ATP = (R)-4'-phosphopantothenate + ADP + H(+). The protein operates within cofactor biosynthesis; coenzyme A biosynthesis; CoA from (R)-pantothenate: step 1/5. This Corynebacterium diphtheriae (strain ATCC 700971 / NCTC 13129 / Biotype gravis) protein is Pantothenate kinase.